Consider the following 158-residue polypeptide: Small ribosomal subunit protein uS15 (158 aa).

Positions 1 to 10 are enriched in basic residues; it reads MARMHTRRRG. Residues 1-66 are disordered; that stretch reads MARMHTRRRG…EGVKGTPIPD (66 aa). A compositionally biased stretch (acidic residues) spans 21–32; the sequence is DPPEWSDIDADA. Basic and acidic residues predominate over residues 33 to 45; the sequence is IEERVVELAEQGH.

The protein belongs to the universal ribosomal protein uS15 family. In terms of assembly, part of the 30S ribosomal subunit.

In Haloquadratum walsbyi (strain DSM 16790 / HBSQ001), this protein is Small ribosomal subunit protein uS15.